The sequence spans 342 residues: Ribosomal RNA small subunit methyltransferase C (342 aa).

It belongs to the methyltransferase superfamily. RsmC family. In terms of assembly, monomer.

The protein localises to the cytoplasm. It carries out the reaction guanosine(1207) in 16S rRNA + S-adenosyl-L-methionine = N(2)-methylguanosine(1207) in 16S rRNA + S-adenosyl-L-homocysteine + H(+). Specifically methylates the guanine in position 1207 of 16S rRNA in the 30S particle. The protein is Ribosomal RNA small subunit methyltransferase C of Salmonella agona (strain SL483).